Consider the following 850-residue polypeptide: Protein translocase subunit SecA 2 (850 aa).

ATP is bound by residues Gln83, 101–105 (GEGKT), and Asp491.

The protein belongs to the SecA family. As to quaternary structure, monomer and homodimer. Part of the essential Sec protein translocation apparatus which comprises SecA, SecYEG and auxiliary proteins SecDF. Other proteins may also be involved.

The protein localises to the cell membrane. It localises to the cytoplasm. It carries out the reaction ATP + H2O + cellular proteinSide 1 = ADP + phosphate + cellular proteinSide 2.. Functionally, part of the Sec protein translocase complex. Interacts with the SecYEG preprotein conducting channel. Has a central role in coupling the hydrolysis of ATP to the transfer of proteins into and across the cell membrane, serving as an ATP-driven molecular motor driving the stepwise translocation of polypeptide chains across the membrane. The polypeptide is Protein translocase subunit SecA 2 (Mycolicibacterium vanbaalenii (strain DSM 7251 / JCM 13017 / BCRC 16820 / KCTC 9966 / NRRL B-24157 / PYR-1) (Mycobacterium vanbaalenii)).